The following is a 450-amino-acid chain: Tubulin alpha-5 chain (450 aa).

7 residues coordinate GTP: Gln-11, Glu-71, Gly-144, Thr-145, Thr-179, Asn-206, and Asn-228. Glu-71 contacts Mg(2+). The active site involves Glu-254.

It belongs to the tubulin family. Dimer of alpha and beta chains. A typical microtubule is a hollow water-filled tube with an outer diameter of 25 nm and an inner diameter of 15 nM. Alpha-beta heterodimers associate head-to-tail to form protofilaments running lengthwise along the microtubule wall with the beta-tubulin subunit facing the microtubule plus end conferring a structural polarity. Microtubules usually have 13 protofilaments but different protofilament numbers can be found in some organisms and specialized cells. Requires Mg(2+) as cofactor. In terms of processing, undergoes a tyrosination/detyrosination cycle, the cyclic removal and re-addition of a C-terminal tyrosine residue by the enzymes tubulin tyrosine carboxypeptidase (TTCP) and tubulin tyrosine ligase (TTL), respectively.

The protein resides in the cytoplasm. It is found in the cytoskeleton. The enzyme catalyses GTP + H2O = GDP + phosphate + H(+). In terms of biological role, tubulin is the major constituent of microtubules, a cylinder consisting of laterally associated linear protofilaments composed of alpha- and beta-tubulin heterodimers. Microtubules grow by the addition of GTP-tubulin dimers to the microtubule end, where a stabilizing cap forms. Below the cap, tubulin dimers are in GDP-bound state, owing to GTPase activity of alpha-tubulin. In Zea mays (Maize), this protein is Tubulin alpha-5 chain (TUBA5).